Consider the following 621-residue polypeptide: Chaperone protein HscA homolog (621 aa).

The protein belongs to the heat shock protein 70 family.

Chaperone involved in the maturation of iron-sulfur cluster-containing proteins. Has a low intrinsic ATPase activity which is markedly stimulated by HscB. The chain is Chaperone protein HscA homolog from Cupriavidus taiwanensis (strain DSM 17343 / BCRC 17206 / CCUG 44338 / CIP 107171 / LMG 19424 / R1) (Ralstonia taiwanensis (strain LMG 19424)).